A 329-amino-acid chain; its full sequence is Elongation factor Ts (329 aa).

The tract at residues 79 to 82 is involved in Mg(2+) ion dislocation from EF-Tu; that stretch reads TDFV.

Belongs to the EF-Ts family.

The protein localises to the cytoplasm. Functionally, associates with the EF-Tu.GDP complex and induces the exchange of GDP to GTP. It remains bound to the aminoacyl-tRNA.EF-Tu.GTP complex up to the GTP hydrolysis stage on the ribosome. In Parabacteroides distasonis (strain ATCC 8503 / DSM 20701 / CIP 104284 / JCM 5825 / NCTC 11152), this protein is Elongation factor Ts.